The chain runs to 333 residues: MKNLRNRSFLTLLDFSRQEVEFLLTLSEDLKRAKYIGTEKPMLKNKNIALLFEKDSTRTRCAFEVAAHDQGAHVTYLGPTGSQMGKKETAKDTARVLGGMYDGIEYRGFSQRTVETLAQYSGVPVWNGLTDEDHPTQVLADFLTAKEVLKKEYADINFTYVGDGRNNVANALMQGAAIMGMNFHLVCPKELNPTEELLNRCERIATENGGNILITDDIDKGVKDSDVIYTDVWVSMGEPDEVWQERLKLLKPYQVNQALLEKTGNPNVIFEHCLPSFHNAETKIGQQIYEKYGISEMEVTDDVFESKASVVFQEAENRMHTIKAVMVATLGEF.

Residues 56–59, glutamine 83, arginine 107, and 134–137 each bind carbamoyl phosphate; these read STRT and HPTQ. L-ornithine is bound by residues asparagine 167, aspartate 231, and 235–236; that span reads SM. Residues 273 to 274 and arginine 318 contribute to the carbamoyl phosphate site; that span reads CL.

This sequence belongs to the aspartate/ornithine carbamoyltransferase superfamily. OTCase family.

It is found in the cytoplasm. It carries out the reaction carbamoyl phosphate + L-ornithine = L-citrulline + phosphate + H(+). It participates in amino-acid biosynthesis; L-arginine biosynthesis; L-arginine from L-ornithine and carbamoyl phosphate: step 1/3. In terms of biological role, has vitronectin and fibronectin-binding activity. Reversibly catalyzes the transfer of the carbamoyl group from carbamoyl phosphate (CP) to the N(epsilon) atom of ornithine (ORN) to produce L-citrulline. The sequence is that of Ornithine carbamoyltransferase (argF) from Staphylococcus epidermidis (strain ATCC 12228 / FDA PCI 1200).